The primary structure comprises 382 residues: uncharacterized protein (382 aa).

12 consecutive transmembrane segments (helical) span residues 8–28 (VMLL…LNTL), 45–65 (MVSS…GYLI), 75–95 (YLAS…VGFW), 102–122 (FIAG…LMCS), 131–151 (LLAA…LLVS), 157–177 (LLHV…PLLF), 204–224 (LGVN…GLMP), 231–251 (GMAN…GILG), 270–290 (VQVF…AMAP), 291–311 (ALFI…AWAC), 325–345 (ALLL…AMLM), and 349–369 (SDNL…LMLL).

This sequence belongs to the major facilitator superfamily. YcaD (TC 2.A.1.26) family.

Its subcellular location is the cell inner membrane. This is an uncharacterized protein from Salmonella newport (strain SL254).